Consider the following 247-residue polypeptide: Adenosylcobinamide-GDP ribazoletransferase (247 aa).

5 helical membrane-spanning segments follow: residues 34–54 (IITF…VFMV), 57–77 (AWCG…LMTG), 113–133 (GGLA…ELAL), 138–158 (ILAS…LLMY), and 194–214 (VLLL…AIFI).

Belongs to the CobS family. Mg(2+) serves as cofactor.

It localises to the cell inner membrane. It carries out the reaction alpha-ribazole + adenosylcob(III)inamide-GDP = adenosylcob(III)alamin + GMP + H(+). The enzyme catalyses alpha-ribazole 5'-phosphate + adenosylcob(III)inamide-GDP = adenosylcob(III)alamin 5'-phosphate + GMP + H(+). Its pathway is cofactor biosynthesis; adenosylcobalamin biosynthesis; adenosylcobalamin from cob(II)yrinate a,c-diamide: step 7/7. Its function is as follows. Joins adenosylcobinamide-GDP and alpha-ribazole to generate adenosylcobalamin (Ado-cobalamin). Also synthesizes adenosylcobalamin 5'-phosphate from adenosylcobinamide-GDP and alpha-ribazole 5'-phosphate. This chain is Adenosylcobinamide-GDP ribazoletransferase, found in Shigella flexneri.